A 278-amino-acid chain; its full sequence is Membrane protein insertase YidC 2 (278 aa).

A signal peptide spans 1–18 (MHKRLFITLLGFIILLAG). A lipid anchor (N-palmitoyl cysteine) is attached at Cys19. Cys19 is lipidated: S-diacylglycerol cysteine. 4 consecutive transmembrane segments (helical) span residues 55-75 (GFAIISIVLIVRFILLPFMLI), 132-152 (MLGCLPVLIQMPILMGLYMSL), 176-196 (LIMTIIAAIMYFVQPLVNSIH), and 224-244 (AAALGLYWSISAAFLIVQMHF).

It belongs to the OXA1/ALB3/YidC family. Type 2 subfamily.

Its subcellular location is the cell membrane. Its function is as follows. Required for the insertion and/or proper folding and/or complex formation of integral membrane proteins into the membrane. Involved in integration of membrane proteins that insert both dependently and independently of the Sec translocase complex, as well as at least some lipoproteins. The polypeptide is Membrane protein insertase YidC 2 (Staphylococcus epidermidis (strain ATCC 12228 / FDA PCI 1200)).